Reading from the N-terminus, the 312-residue chain is Aspartate carbamoyltransferase catalytic subunit (312 aa).

Carbamoyl phosphate contacts are provided by Arg-58 and Thr-59. Position 86 (Lys-86) interacts with L-aspartate. Carbamoyl phosphate contacts are provided by Arg-108, His-136, and Gln-139. Positions 169 and 223 each coordinate L-aspartate. Carbamoyl phosphate-binding residues include Gly-264 and Pro-265.

Belongs to the aspartate/ornithine carbamoyltransferase superfamily. ATCase family. As to quaternary structure, heterododecamer (2C3:3R2) of six catalytic PyrB chains organized as two trimers (C3), and six regulatory PyrI chains organized as three dimers (R2).

It carries out the reaction carbamoyl phosphate + L-aspartate = N-carbamoyl-L-aspartate + phosphate + H(+). It functions in the pathway pyrimidine metabolism; UMP biosynthesis via de novo pathway; (S)-dihydroorotate from bicarbonate: step 2/3. Its function is as follows. Catalyzes the condensation of carbamoyl phosphate and aspartate to form carbamoyl aspartate and inorganic phosphate, the committed step in the de novo pyrimidine nucleotide biosynthesis pathway. The chain is Aspartate carbamoyltransferase catalytic subunit from Desulfitobacterium hafniense (strain DSM 10664 / DCB-2).